The following is a 422-amino-acid chain: Interleukin-11 receptor subunit alpha (422 aa).

The N-terminal stretch at 1–22 (MSSSCSGLSRVLVAVATALVSA) is a signal peptide. Residues 24-370 (SPCPQAWGPP…DSVEQVAVLA (347 aa)) lie on the Extracellular side of the membrane. Residues 27–110 (PQAWGPPGVQ…LGGTVTLQLG (84 aa)) form the Ig-like C2-type domain. Intrachain disulfides connect C48-C94, C120-C130, and C170-C180. 2 consecutive Fibronectin type-III domains span residues 112–219 (PPAR…LRPD) and 220–317 (PPQG…TPST). N127 carries an N-linked (GlcNAc...) asparagine glycan. Residue N194 is glycosylated (N-linked (GlcNAc...) asparagine). The WSXWS motif signature appears at 304–308 (WSTWS). Residues 335–355 (EVEPQVDSPAPPRPSLQPHPR) form a disordered region. A helical membrane pass occupies residues 371 to 391 (SLGILSFLGLVAGALALGLWL). The Cytoplasmic portion of the chain corresponds to 392-422 (RLRRGGKDGSPKPGFLASVIPVDRRPGAPNL). The disordered stretch occupies residues 398–422 (KDGSPKPGFLASVIPVDRRPGAPNL). Residues 413 to 422 (VDRRPGAPNL) are compositionally biased toward basic and acidic residues.

This sequence belongs to the type I cytokine receptor family. Type 3 subfamily. As to quaternary structure, on IL11 binding, forms a multimer complex with IL6ST/gp130. Post-translationally, a short soluble form is also released from the membrane by proteolysis. The sIL11RA is formed either by limited proteolysis of membrane-bound receptors, a process referred to as ectodomain shedding, or directly secreted from the cells after alternative mRNA splicing. mIL11RA is cleaved by the proteases ADAM10, ELANE and PRTN3. In terms of tissue distribution, expressed in a number of cell lines, including the myelogenous leukemia cell line K-562, the megakaryocytic leukemia cell line M-07e, the erythroleukemia cell line TF-1, and the osteosarcoma cell lines, MG-63 and SaOS-2. Also expressed in normal and malignant prostate epithelial cell lines. Expression levels are increased in prostate carcinoma.

Its subcellular location is the membrane. The protein resides in the secreted. Receptor for interleukin-11 (IL11). The receptor systems for IL6, LIF, OSM, CNTF, IL11 and CT1 can utilize IL6ST for initiating signal transmission. The IL11/IL11RA/IL6ST complex may be involved in the control of proliferation and/or differentiation of skeletogenic progenitor or other mesenchymal cells. Essential for the normal development of craniofacial bones and teeth. Restricts suture fusion and tooth number. In terms of biological role, soluble form of IL11 receptor (sIL11RA) that acts as an agonist of IL11 activity. The IL11:sIL11RA complex binds to IL6ST/gp130 on cell surfaces and induces signaling also on cells that do not express membrane-bound IL11RA in a process called IL11 trans-signaling. The protein is Interleukin-11 receptor subunit alpha of Homo sapiens (Human).